Here is a 122-residue protein sequence, read N- to C-terminus: MPHAWQSCIFDSFSRFVELFLAYNKQRLYFRSSPLLTAEFLRLTNEMQERTKSGAAPNARVLIGQALGAETRCALQFPHDKAKTVSFPRIIHTSITNPWIKLSLVRPYYTFLFSCMLYKIDP.

This is an uncharacterized protein from Saccharomyces cerevisiae (strain ATCC 204508 / S288c) (Baker's yeast).